The primary structure comprises 359 residues: ATP-dependent 6-phosphofructokinase 1 (359 aa).

ATP-binding positions include G14, 78–79 (KG), and 115–118 (GDGS). D116 lines the Mg(2+) pocket. Residues 139–141 (TID), R176, 183–185 (MGR), E236, R277, and 283–286 (HIQR) contribute to the substrate site. Catalysis depends on D141, which acts as the Proton acceptor.

Belongs to the phosphofructokinase type A (PFKA) family. Mixed-substrate PFK group III subfamily. Homodimer or homotetramer. It depends on Mg(2+) as a cofactor.

Its subcellular location is the cytoplasm. The enzyme catalyses beta-D-fructose 6-phosphate + ATP = beta-D-fructose 1,6-bisphosphate + ADP + H(+). The protein operates within carbohydrate degradation; glycolysis; D-glyceraldehyde 3-phosphate and glycerone phosphate from D-glucose: step 3/4. Catalyzes the phosphorylation of D-fructose 6-phosphate to fructose 1,6-bisphosphate by ATP, the first committing step of glycolysis. The sequence is that of ATP-dependent 6-phosphofructokinase 1 from Nostoc sp. (strain PCC 7120 / SAG 25.82 / UTEX 2576).